Reading from the N-terminus, the 312-residue chain is D-alanine--D-alanine ligase (312 aa).

In terms of domain architecture, ATP-grasp spans 108–308; sequence KLVWQQTGIP…YSELVVKVLS (201 aa). An ATP-binding site is contributed by 138–193; the sequence is VAKLGVPLFVKPASEGSSVAVEKVKSADALPAALEEAAKHDKIVIVEKSIEGGGEY. Residues aspartate 262, glutamate 275, and asparagine 277 each coordinate Mg(2+).

It belongs to the D-alanine--D-alanine ligase family. The cofactor is Mg(2+). It depends on Mn(2+) as a cofactor.

Its subcellular location is the cytoplasm. The enzyme catalyses 2 D-alanine + ATP = D-alanyl-D-alanine + ADP + phosphate + H(+). The protein operates within cell wall biogenesis; peptidoglycan biosynthesis. Its function is as follows. Cell wall formation. This chain is D-alanine--D-alanine ligase, found in Burkholderia mallei (strain NCTC 10247).